A 343-amino-acid chain; its full sequence is Nicotianamine synthase 3 (343 aa).

This sequence belongs to the nicotianamine synthase (NAS)-like family. In terms of tissue distribution, expressed in leaves.

It carries out the reaction 3 S-adenosyl-L-methionine = nicotianamine + 3 S-methyl-5'-thioadenosine + 3 H(+). Its function is as follows. Synthesizes nicotianamine, a polyamine that is the first intermediate in the synthesis of the phytosiderophores of the mugineic acid type found in gramineae which serve as a sensor for the physiological iron status within the plant, and/or might be involved in the transport of iron. This chain is Nicotianamine synthase 3 (NAS3), found in Oryza sativa subsp. indica (Rice).